The primary structure comprises 513 residues: Cytochrome P450 monooxygenase asaD (513 aa).

Residues 14–34 (ILYPFLFGIFAVASLCIATLL) form a helical membrane-spanning segment. N-linked (GlcNAc...) asparagine glycosylation is found at N258, N370, N431, and N441. C461 lines the heme pocket.

This sequence belongs to the cytochrome P450 family. Heme serves as cofactor.

The protein resides in the membrane. It functions in the pathway secondary metabolite biosynthesis. In terms of biological role, cytochrome P450 monooxygenase; part of the gene cluster that mediates the biosynthesis of aspergillic acid, a hydroxamic acid-containing pyrazinone with aliphatic side chains that originates from leucine (Leu) and isoleucine (Ile). Aspergillic acid has antibiotic properties and was shown to be lethal to mice. The first step in the pathway is the production of deoxyaspergillic acid via a condensation between the Ile amine and the Leu carboxylic acid, followed by a reductive release from the protein forming the dipeptide aldehyde NH(2)-Leu-Ile-CHO, which could undergo an intermolecular cyclization resulting in a dihydropyrazinone. As the NRPS asaC lacks a condensation domain, it is improbable that it is responsible for condensation of Leu and Ile. One possibility is that asaC acts on a previously condensed dipeptide and functions as a Leu-Ile reductase to yield deoxyaspergillic acid. After asaC forms deoxyaspergillic acid, the cytochrome P450 asaD oxidizes the pyrazinone to the hydroxamic acid-containing bioactive metabolite aspergillic acid. The hydroxylase/desaturase asaB can then convert aspergillic acid to hydroxyaspergillic acid. Both aspergillic acid and hydroxyaspergillic acid can form complexes with iron producing ferriaspergillin analogs. This chain is Cytochrome P450 monooxygenase asaD, found in Aspergillus flavus (strain ATCC 200026 / FGSC A1120 / IAM 13836 / NRRL 3357 / JCM 12722 / SRRC 167).